A 274-amino-acid polypeptide reads, in one-letter code: Bis(5'-nucleosyl)-tetraphosphatase, symmetrical (274 aa).

The protein belongs to the Ap4A hydrolase family.

It catalyses the reaction P(1),P(4)-bis(5'-adenosyl) tetraphosphate + H2O = 2 ADP + 2 H(+). Functionally, hydrolyzes diadenosine 5',5'''-P1,P4-tetraphosphate to yield ADP. The polypeptide is Bis(5'-nucleosyl)-tetraphosphatase, symmetrical (Erwinia tasmaniensis (strain DSM 17950 / CFBP 7177 / CIP 109463 / NCPPB 4357 / Et1/99)).